The following is a 793-amino-acid chain: MAAGRPVRGPELAPRRLLQLLLLVLLGGRGRGAALSGNVTGPGPRSAGGSARRNAPVTSPPPPLLSHCGRAAHCEPLRYNVCLGSALPYGATTTLLAGDSDSQEEAHSKLVLWSGLRNAPRCWAVIQPLLCAVYMPKCENDRVELPSRTLCQATRGPCAIVERERGWPDFLRCTPDHFPEGCPNEVQNIKFNSSGQCEAPLVRTDNPKSWYEDVEGCGIQCQNPLFTEAEHQDMHSYIAAFGAVTGLCTLFTLATFVADWRNSNRYPAVILFYVNACFFVGSIGWLAQFMDGARREIVCRADGTMRFGEPTSSETLSCVIIFVIVYYALMAGVVWFVVLTYAWHTSFKALGTTYQPLSGKTSYFHLLTWSLPFVLTVAILAVAQVDGDSVSGICFVGYKNYRYRAGFVLAPIGLVLIVGGYFLIRGVMTLFSIKSNHPGLLSEKAASKINETMLRLGIFGFLAFGFVLITFSCHFYDFFNQAEWERSFRDYVLCQANVTIGLPTKKPIPDCEIKNRPSLLVEKINLFAMFGTGIAMSTWVWTKATLLIWRRTWCRLTGHSDDEPKRIKKSKMIAKAFSKRRELLQNPGQELSFSMHTVSHDGPVAGLAFELNEPSADVSSAWAQHVTKMVARRGAILPQDVSVTPVATPVPPEEQANLWLVEAEISPELEKRLGRKKKRRKRKKEVCPLGPAPELHHSAPVPATSAVPRLPQLPRQKCLVAANAWGTGEPCRQGAWTVVSNPFCPEPSPHQDPFLPGASAPRVWAQGRLQGLGSIHSRTNLMEAELLDADSDF.

The first 30 residues, 1–30, serve as a signal peptide directing secretion; that stretch reads MAAGRPVRGPELAPRRLLQLLLLVLLGGRG. Over 31–237 the chain is Extracellular; sequence RGAALSGNVT…EAEHQDMHSY (207 aa). Positions 35–61 are disordered; that stretch reads LSGNVTGPGPRSAGGSARRNAPVTSPP. N-linked (GlcNAc...) asparagine glycosylation occurs at asparagine 38. Cystine bridges form between cysteine 68/cysteine 182, cysteine 74/cysteine 138, cysteine 82/cysteine 131, cysteine 122/cysteine 158, and cysteine 151/cysteine 173. Positions 69–185 constitute an FZ domain; the sequence is GRAAHCEPLR…DHFPEGCPNE (117 aa). Residue aspartate 99 coordinates cholesterol. Asparagine 192 carries N-linked (GlcNAc...) asparagine glycosylation. Intrachain disulfides connect cysteine 197-cysteine 217, cysteine 221-cysteine 299, and cysteine 318-cysteine 394. The chain crosses the membrane as a helical span at residues 238 to 258; it reads IAAFGAVTGLCTLFTLATFVA. Residues 259 to 266 lie on the Cytoplasmic side of the membrane; that stretch reads DWRNSNRY. The helical transmembrane segment at 267–287 threads the bilayer; that stretch reads PAVILFYVNACFFVGSIGWLA. At 288-318 the chain is on the extracellular side; that stretch reads QFMDGARREIVCRADGTMRFGEPTSSETLSC. Residues 319 to 339 form a helical membrane-spanning segment; that stretch reads VIIFVIVYYALMAGVVWFVVL. Over 340–362 the chain is Cytoplasmic; that stretch reads TYAWHTSFKALGTTYQPLSGKTS. The helical transmembrane segment at 363–383 threads the bilayer; the sequence is YFHLLTWSLPFVLTVAILAVA. Residues 384 to 406 lie on the Extracellular side of the membrane; the sequence is QVDGDSVSGICFVGYKNYRYRAG. Tyrosine 398 contributes to the cholesterol binding site. The helical transmembrane segment at 407-427 threads the bilayer; it reads FVLAPIGLVLIVGGYFLIRGV. Over 428 to 455 the chain is Cytoplasmic; sequence MTLFSIKSNHPGLLSEKAASKINETMLR. The chain crosses the membrane as a helical span at residues 456 to 476; it reads LGIFGFLAFGFVLITFSCHFY. The Extracellular portion of the chain corresponds to 477–528; sequence DFFNQAEWERSFRDYVLCQANVTIGLPTKKPIPDCEIKNRPSLLVEKINLFA. The cysteines at positions 494 and 511 are disulfide-linked. N-linked (GlcNAc...) asparagine glycosylation occurs at asparagine 497. A helical transmembrane segment spans residues 529 to 549; that stretch reads MFGTGIAMSTWVWTKATLLIW. The segment at 542–573 is interaction with BBS5 and BBS7; sequence TKATLLIWRRTWCRLTGHSDDEPKRIKKSKMI. The Cytoplasmic segment spans residues 550–793; sequence RRTWCRLTGH…AELLDADSDF (244 aa). Serine 560, serine 578, and serine 594 each carry phosphoserine. Positions 574–657 are required for interaction with PRKACA; it reads AKAFSKRREL…TPVPPEEQAN (84 aa). The interaction with DLG5 stretch occupies residues 585–597; it reads QNPGQELSFSMHT. Position 597 is a phosphothreonine (threonine 597). Residues serine 599 and serine 642 each carry the phosphoserine modification. Phosphothreonine is present on residues threonine 644 and threonine 648. Serine 666 is subject to Phosphoserine. Residues 674 to 684 are compositionally biased toward basic residues; that stretch reads GRKKKRRKRKK. Residues 674-702 are disordered; that stretch reads GRKKKRRKRKKEVCPLGPAPELHHSAPVP.

This sequence belongs to the G-protein coupled receptor Fz/Smo family. Homodimer. Interacts (via C-terminus) with protein kinase A catalytic subunit PRKACA; interacts with free PRKACA subunits and the interaction leads to sequestration of PRKACA at the membrane, preventing PRKACA-mediated phosphorylation of GLI transcription factors. Interacts with ARRB2. Interacts with KIF7. Interacts with BBS5 and BBS7; the interactions are indicative for the association of SMO with the BBsome complex to facilitate ciliary localization of SMO. Interacts with DLG5 and SDCBP. Interacts with GAS8/DRC4. Post-translationally, phosphorylation by GRK kinases is required for interaction with protein kinase A catalytic subunit PRKACA. In embryo, found in the early neural folds and neural tube, pre-somitic mesoderm and somites, developing limb bud, gut, eye, testes, cartilage, muscle, lung, epiglottis, thymus, tongue, jaw, taste buds, teeth, and skin. In adult, found in multiple tissues including heart, brain, liver, lung, skeletal muscle, kidney and testis.

Its subcellular location is the cell membrane. The protein resides in the cell projection. It localises to the cilium. Functionally, g protein-coupled receptor which associates with the patched protein (PTCH) to transduce hedgehog protein signaling. Binding of sonic hedgehog (SHH) to its receptor patched prevents inhibition of smoothened (SMO) by patched. When active, SMO binds to and sequesters protein kinase A catalytic subunit PRKACA at the cell membrane, preventing PRKACA-mediated phosphorylation of GLI transcription factors which releases the GLI proteins from PRKACA-mediated inhibition and allows for transcriptional activation of hedgehog pathway target genes. Required for the accumulation of KIF7, GLI2 and GLI3 in the cilia. Interacts with DLG5 at the ciliary base to induce the accumulation of KIF7 and GLI2 at the ciliary tip for GLI2 activation. The protein is Protein smoothened (Smo) of Rattus norvegicus (Rat).